A 203-amino-acid polypeptide reads, in one-letter code: MNPEYDYLFKLLLIGDSGVGKSCLLLRFADDTYTESYISTIGVDFKIRTFELEGKTVKLQIWDTAGQERFRTITSSYYRGAHGIIIVYDVTDQDSFNNVKQWLQEIDRYAVEGVNRLLVGNKSDMVDKKVVEYSVAKEFADSLNIPFLETSAKDSTNVEQAFLTMSRQIKERMGNNTFASSNAKSSVKVGQGTNVSQSSSNCC.

GTP-binding positions include 15-23 (GDSGVGKSC), 33-40 (YTESYIST), 63-67 (DTAGQ), 121-124 (NKSD), and 151-153 (SAK). The short motif at 37–45 (YISTIGVDF) is the Effector region element. At threonine 164 the chain carries Phosphothreonine. 2 S-geranylgeranyl cysteine lipidation sites follow: cysteine 202 and cysteine 203.

The protein belongs to the small GTPase superfamily. Rab family.

It is found in the endoplasmic reticulum membrane. Its subcellular location is the golgi apparatus membrane. The protein localises to the cytoplasm. It localises to the preautophagosomal structure membrane. Its activity is regulated as follows. Rab activation is generally mediated by a guanine exchange factor (GEF), while inactivation through hydrolysis of bound GTP is catalyzed by a GTPase activating protein (GAP). Functionally, the small GTPases Rab are key regulators of intracellular membrane trafficking, from the formation of transport vesicles to their fusion with membranes. Rabs cycle between an inactive GDP-bound form and an active GTP-bound form that is able to recruit to membranes different set of downstream effectors directly responsible for vesicle formation, movement, tethering and fusion. Ypt1 regulates the trafficking of secretory vesicles from the endoplasmic reticulum (ER) to the Golgi. Plays a role in the initial events of the autophagic vacuole development which take place at specialized regions of the endoplasmic reticulum. Also involved in the recycling of membrane proteins. The protein is GTP-binding protein ypt1 (ypt1) of Schizosaccharomyces pombe (strain 972 / ATCC 24843) (Fission yeast).